A 396-amino-acid chain; its full sequence is Elongation factor Tu (396 aa).

Positions 10-206 constitute a tr-type G domain; sequence KPHINVGTIG…ALDSYIPEPQ (197 aa). The tract at residues 19-26 is G1; it reads GHVDHGKT. Position 19-26 (19-26) interacts with GTP; sequence GHVDHGKT. Thr26 serves as a coordination point for Mg(2+). A G2 region spans residues 60–64; sequence GITIN. Residues 81-84 are G3; it reads DCPG. Residues 81 to 85 and 136 to 139 contribute to the GTP site; these read DCPGH and NKAD. The G4 stretch occupies residues 136 to 139; it reads NKAD. The segment at 174 to 176 is G5; that stretch reads SAL.

It belongs to the TRAFAC class translation factor GTPase superfamily. Classic translation factor GTPase family. EF-Tu/EF-1A subfamily. Monomer.

Its subcellular location is the cytoplasm. The enzyme catalyses GTP + H2O = GDP + phosphate + H(+). GTP hydrolase that promotes the GTP-dependent binding of aminoacyl-tRNA to the A-site of ribosomes during protein biosynthesis. The chain is Elongation factor Tu from Nitrosospira multiformis (strain ATCC 25196 / NCIMB 11849 / C 71).